A 487-amino-acid chain; its full sequence is Acetyl-coenzyme A carboxylase carboxyl transferase subunit beta, chloroplastic (487 aa).

Positions 223-487 (LWIQCDNCYG…FFPLKKNEIK (265 aa)) constitute a CoA carboxyltransferase N-terminal domain. Zn(2+) contacts are provided by Cys-227, Cys-230, Cys-243, and Cys-246. The C4-type zinc-finger motif lies at 227–246 (CDNCYGLMYKKVKMNVCEQC).

The protein belongs to the AccD/PCCB family. As to quaternary structure, acetyl-CoA carboxylase is a heterohexamer composed of biotin carboxyl carrier protein, biotin carboxylase and 2 subunits each of ACCase subunit alpha and ACCase plastid-coded subunit beta (accD). Zn(2+) is required as a cofactor.

The protein localises to the plastid. Its subcellular location is the chloroplast stroma. It catalyses the reaction N(6)-carboxybiotinyl-L-lysyl-[protein] + acetyl-CoA = N(6)-biotinyl-L-lysyl-[protein] + malonyl-CoA. It functions in the pathway lipid metabolism; malonyl-CoA biosynthesis; malonyl-CoA from acetyl-CoA: step 1/1. Functionally, component of the acetyl coenzyme A carboxylase (ACC) complex. Biotin carboxylase (BC) catalyzes the carboxylation of biotin on its carrier protein (BCCP) and then the CO(2) group is transferred by the transcarboxylase to acetyl-CoA to form malonyl-CoA. This chain is Acetyl-coenzyme A carboxylase carboxyl transferase subunit beta, chloroplastic, found in Lepidium virginicum (Virginia pepperweed).